A 316-amino-acid chain; its full sequence is MGAVIDDSMPGPGADATGTGPSDARTERETRKLEKRLCRAVGKAIDDFHMIEAGDKVMVCMSGGKDSYTLLDILLKLRARAPIAFDLVAVNLDQKQPGFPAHVLPGYLASAGVPYHIETEDTYGIVKRLIPEGKTTCSLCSRLRRGILYRVASELGCTKIALGHHRDDILQTLLLNMFFGGKMKSMPPKLVSDDGQHVVIRPLAYVAEKDTARWAAQRNFPIIACNLCGSQQNLQRQQVGQMLREWEKKLPGRVENMFNALQNIVPSHLLDARLYDFKNARATGLASADGDKAFDPQELATPAEQVVQIVPTRRSS.

Residues 1 to 31 (MGAVIDDSMPGPGADATGTGPSDARTERETR) are disordered. Low complexity predominate over residues 10-21 (PGPGADATGTGP). Residues 62–67 (SGGKDS) carry the PP-loop motif motif. 3 residues coordinate [4Fe-4S] cluster: Cys-137, Cys-140, and Cys-228.

Belongs to the TtcA family. Homodimer. Mg(2+) serves as cofactor. Requires [4Fe-4S] cluster as cofactor.

Its subcellular location is the cytoplasm. The enzyme catalyses cytidine(32) in tRNA + S-sulfanyl-L-cysteinyl-[cysteine desulfurase] + AH2 + ATP = 2-thiocytidine(32) in tRNA + L-cysteinyl-[cysteine desulfurase] + A + AMP + diphosphate + H(+). Its pathway is tRNA modification. Its function is as follows. Catalyzes the ATP-dependent 2-thiolation of cytidine in position 32 of tRNA, to form 2-thiocytidine (s(2)C32). The sulfur atoms are provided by the cysteine/cysteine desulfurase (IscS) system. The polypeptide is tRNA-cytidine(32) 2-sulfurtransferase (Verminephrobacter eiseniae (strain EF01-2)).